Consider the following 401-residue polypeptide: Nicotinate phosphoribosyltransferase (401 aa).

His221 carries the phosphohistidine; by autocatalysis modification.

Belongs to the NAPRTase family. Transiently phosphorylated on a His residue during the reaction cycle. Phosphorylation strongly increases the affinity for substrates and increases the rate of nicotinate D-ribonucleotide production. Dephosphorylation regenerates the low-affinity form of the enzyme, leading to product release.

The enzyme catalyses nicotinate + 5-phospho-alpha-D-ribose 1-diphosphate + ATP + H2O = nicotinate beta-D-ribonucleotide + ADP + phosphate + diphosphate. It functions in the pathway cofactor biosynthesis; NAD(+) biosynthesis; nicotinate D-ribonucleotide from nicotinate: step 1/1. In terms of biological role, catalyzes the synthesis of beta-nicotinate D-ribonucleotide from nicotinate and 5-phospho-D-ribose 1-phosphate at the expense of ATP. This chain is Nicotinate phosphoribosyltransferase, found in Yersinia enterocolitica serotype O:8 / biotype 1B (strain NCTC 13174 / 8081).